The chain runs to 397 residues: Arginine biosynthesis bifunctional protein ArgJ (397 aa).

Residues Thr-147, Lys-173, Thr-184, Glu-270, Asn-392, and Thr-397 each contribute to the substrate site. The active-site Nucleophile is the Thr-184.

It belongs to the ArgJ family. In terms of assembly, heterotetramer of two alpha and two beta chains.

Its subcellular location is the cytoplasm. The catalysed reaction is N(2)-acetyl-L-ornithine + L-glutamate = N-acetyl-L-glutamate + L-ornithine. The enzyme catalyses L-glutamate + acetyl-CoA = N-acetyl-L-glutamate + CoA + H(+). The protein operates within amino-acid biosynthesis; L-arginine biosynthesis; L-ornithine and N-acetyl-L-glutamate from L-glutamate and N(2)-acetyl-L-ornithine (cyclic): step 1/1. It participates in amino-acid biosynthesis; L-arginine biosynthesis; N(2)-acetyl-L-ornithine from L-glutamate: step 1/4. Its function is as follows. Catalyzes two activities which are involved in the cyclic version of arginine biosynthesis: the synthesis of N-acetylglutamate from glutamate and acetyl-CoA as the acetyl donor, and of ornithine by transacetylation between N(2)-acetylornithine and glutamate. This is Arginine biosynthesis bifunctional protein ArgJ from Streptococcus mutans serotype c (strain ATCC 700610 / UA159).